The sequence spans 583 residues: CBP80/20-dependent translation initiation factor (583 aa).

4 disordered regions span residues threonine 42 to methionine 95, arginine 129 to glycine 154, arginine 190 to glutamine 251, and serine 294 to isoleucine 325. The span at aspartate 43 to lysine 53 shows a compositional bias: basic and acidic residues. The span at threonine 54–valine 63 shows a compositional bias: polar residues. Basic and acidic residues-rich tracts occupy residues cysteine 65 to glutamate 80 and isoleucine 141 to glycine 154. The segment covering arginine 190–glutamine 199 has biased composition (basic residues). A compositionally biased stretch (low complexity) spans lysine 200–asparagine 213. The segment covering serine 298–lysine 324 has biased composition (basic and acidic residues). The region spanning isoleucine 361–serine 562 is the MIF4G domain.

The protein belongs to the CTIF family.

It localises to the cytoplasm. Its subcellular location is the perinuclear region. In terms of biological role, specifically required for the pioneer round of mRNA translation mediated by the cap-binding complex (CBC), that takes place during or right after mRNA export via the nuclear pore complex (NPC). In contrast, it is not involved in steady state translation, that takes place when the CBC complex is replaced by cytoplasmic cap-binding protein eIF4E. Also required for nonsense-mediated mRNA decay (NMD), the pioneer round of mRNA translation mediated by the cap-binding complex playing a central role in nonsense-mediated mRNA decay (NMD). This chain is CBP80/20-dependent translation initiation factor (ctif), found in Xenopus tropicalis (Western clawed frog).